A 206-amino-acid polypeptide reads, in one-letter code: GTP-binding protein Rho3 (206 aa).

24-31 is a binding site for GTP; that stretch reads GDGACGKT. The Effector region motif lies at 46–54; sequence YEPTVFENY. GTP is bound by residues 71 to 75 and 129 to 132; these read DTAGQ and SKCD. The residue at position 203 (cysteine 203) is a Cysteine methyl ester. Cysteine 203 carries S-geranylgeranyl cysteine lipidation. Residues 204-206 constitute a propeptide, removed in mature form; sequence CVM.

This sequence belongs to the small GTPase superfamily. Rho family.

Its subcellular location is the cell membrane. The protein is GTP-binding protein Rho3 (RHO3) of Schizophyllum commune (Split gill fungus).